A 989-amino-acid polypeptide reads, in one-letter code: MKVVNLKQAILQAWKERWSDYQWAINMKKFFPKGATWDILNLADALLEQAMIGPSPNPLILSYLKYAISSQMVSYSSVLTAISKFDDFSRDLCVQALLDIMDMFCDRLSCHGKAEECIGLCRALLSALHWLLRCTAASAERLREGLEAGTPAAGEKQLAMCLQRLEKTLSSTKNRALLHIAKLEEASSWTAIEHSLLKLGEILANLSNPQLRSQAEQCGTLIRSIPTMLSVHAEQMHKTGFPTVHAVILLEGTMNLTGETQSLVEQLTMVKRMQHIPTPLFVLEIWKACFVGLIESPEGTEELKWTAFTFLKIPQVLVKLKKYSHGDKDFTEDVNCAFEFLLKLTPLLDKADQRCNCDCTNFLLQECGKQGLLSEASVNNLMAKRKADREHAPQQKSGENANIQPNIQLILRAEPTVTNILKTMDADHSKSPEGLLGVLGHMLSGKSLDLLLAAAAATGKLKSFARKFINLNEFTTYGSEESTKPASVRALLFDISFLMLCHVAQTYGSEVILSESRTGAEVPFFETWMQTCMPEEGKILNPDHPCFRPDSTKVESLVALLNNSSEMKLVQMKWHEACLSISAAILEILNAWENGVLAFESIQKITDNIKGKVCSLAVCAVAWLVAHVRMLGLDEREKSLQMIRQLAGPLFSENTLQFYNERVVIMNSILERMCADVLQQTATQIKFPSTGVDTMPYWNLLPPKRPIKEVLTDIFAKVLEKGWVDSRSIHIFDTLLHMGGVYWFCNNLIKELLKETRKEHTLRAVELLYSIFCLDMQQVTLVLLGHILPGLLTDSSKWHSLMDPPGTALAKLAVWCALSSYSSHKGQASTRQKKRHREDIEDYISLFPLDDVQPSKLMRLLSSNEDDANILSSPTDRSMSSSLSASQLHTVNMRDPLNRVLANLFLLISSILGSRTAGPHTQFVQWFMEECVDCLEQGGRGSVLQFMPFTTVSELVKVSAMSSPKVVLAITDLSLPLGRQVAAKAIAAL.

6 short sequence motifs (LXXLL motif) span residues 128–132, 344–348, 448–452, 557–561, 788–792, and 857–861; these read LHWLL, LTPLL, LDLLL, LVALL, LPGLL, and LMRLL. 2 positions are modified to phosphoserine: Ser-862 and Ser-873.

It belongs to the Mediator complex subunit 24 family. As to quaternary structure, component of the Mediator complex, which is composed of MED1, MED4, MED6, MED7, MED8, MED9, MED10, MED11, MED12, MED13, MED13L, MED14, MED15, MED16, MED17, MED18, MED19, MED20, MED21, MED22, MED23, MED24, MED25, MED26, MED27, MED29, MED30, MED31, CCNC, CDK8 and CDC2L6/CDK11. The MED12, MED13, CCNC and CDK8 subunits form a distinct module termed the CDK8 module. Mediator containing the CDK8 module is less active than Mediator lacking this module in supporting transcriptional activation. Individual preparations of the Mediator complex lacking one or more distinct subunits have been variously termed ARC, CRSP, DRIP, PC2, SMCC and TRAP. Interacts with AR. In terms of tissue distribution, ubiquitous. Abundant in skeletal muscle, heart and placenta.

It is found in the nucleus. Its function is as follows. Component of the Mediator complex, a coactivator involved in the regulated transcription of nearly all RNA polymerase II-dependent genes. Mediator functions as a bridge to convey information from gene-specific regulatory proteins to the basal RNA polymerase II transcription machinery. Mediator is recruited to promoters by direct interactions with regulatory proteins and serves as a scaffold for the assembly of a functional preinitiation complex with RNA polymerase II and the general transcription factors. The polypeptide is Mediator of RNA polymerase II transcription subunit 24 (MED24) (Homo sapiens (Human)).